Reading from the N-terminus, the 804-residue chain is uncharacterized protein (804 aa).

The next 10 membrane-spanning stretches (helical) occupy residues 15–35, 243–263, 301–321, 333–353, 381–401, 403–423, 453–473, 680–700, 734–754, and 769–789; these read LLIV…LGNI, FLLL…AVAM, LSAV…MVLL, SLWP…LVGL, FYLP…MGGS, LLWA…VLGW, TLSQ…LLVL, ALEV…LAQV, MLGF…LAVL, and LWIV…GWLG.

It belongs to the ABC-4 integral membrane protein family.

The protein localises to the cell membrane. This is an uncharacterized protein from Escherichia coli (strain K12).